The chain runs to 135 residues: ATP synthase epsilon chain (135 aa).

The protein belongs to the ATPase epsilon chain family. As to quaternary structure, F-type ATPases have 2 components, CF(1) - the catalytic core - and CF(0) - the membrane proton channel. CF(1) has five subunits: alpha(3), beta(3), gamma(1), delta(1), epsilon(1). CF(0) has three main subunits: a, b and c.

Its subcellular location is the cell inner membrane. In terms of biological role, produces ATP from ADP in the presence of a proton gradient across the membrane. The sequence is that of ATP synthase epsilon chain from Rhodopseudomonas palustris (strain BisB5).